The primary structure comprises 311 residues: Transcriptional repressor scratch 2 (311 aa).

The interval 1–20 (MPRSFLVKKIKADGFQCSGV) is SNAG domain. 2 disordered regions span residues 71–90 (PAYP…PQSS) and 120–156 (RRRA…ATAG). The segment covering 124–146 (GAGGDAAGAGDAGGGGGGGGGGE) has biased composition (gly residues). 4 C2H2-type zinc fingers span residues 161–183 (HACA…KQTH), 192–214 (RKCP…VLTH), 218–240 (HKCG…MRSH), and 246–268 (FGCA…MQTH). The C2H2-type 5; atypical zinc finger occupies 274–297 (YRCRQCDKSFALKSYLHKHCEAAC).

The protein belongs to the snail C2H2-type zinc-finger protein family.

The protein resides in the nucleus. May be involved in transcriptional regulation. The polypeptide is Transcriptional repressor scratch 2 (Scrt2) (Mus musculus (Mouse)).